A 459-amino-acid chain; its full sequence is NADP-specific glutamate dehydrogenase (459 aa).

Lys-116 is an active-site residue.

It belongs to the Glu/Leu/Phe/Val dehydrogenases family. As to quaternary structure, homohexamer.

It catalyses the reaction L-glutamate + NADP(+) + H2O = 2-oxoglutarate + NH4(+) + NADPH + H(+). In Schwanniomyces occidentalis (Yeast), this protein is NADP-specific glutamate dehydrogenase (GDHA).